Here is a 335-residue protein sequence, read N- to C-terminus: Lipase chaperone (335 aa).

A helical transmembrane segment spans residues Leu-7–Pro-23.

The protein belongs to the lipase chaperone family.

It is found in the cell inner membrane. In terms of biological role, may be involved in the folding of the extracellular lipase during its passage through the periplasm. The chain is Lipase chaperone (lifO) from Ectopseudomonas mendocina (Pseudomonas mendocina).